Here is a 243-residue protein sequence, read N- to C-terminus: Carboxy-S-adenosyl-L-methionine synthase (243 aa).

Residues tyrosine 40, 65 to 67 (GCS), 90 to 91 (DN), 118 to 119 (DI), asparagine 133, and arginine 200 each bind S-adenosyl-L-methionine.

Belongs to the class I-like SAM-binding methyltransferase superfamily. Cx-SAM synthase family. Homodimer.

The catalysed reaction is prephenate + S-adenosyl-L-methionine = carboxy-S-adenosyl-L-methionine + 3-phenylpyruvate + H2O. Catalyzes the conversion of S-adenosyl-L-methionine (SAM) to carboxy-S-adenosyl-L-methionine (Cx-SAM). The chain is Carboxy-S-adenosyl-L-methionine synthase from Shewanella sp. (strain ANA-3).